The chain runs to 1441 residues: MAFAAGGIDHHVAVDVEGEEESRRRAVAEEADLLWAAFERLPSAKRRSHAVVLPDPDGLGGGDGGGRGEGQLVDVRKLDRPGLQRVLRHALATSELDNANLLHGIKARFDAVGLEVPRVEVRFQNLTVSTDVHVGRRALPTLVNYVHDIAERILISSHLLRPDKHKLVILDDVSGVIKPGRMTLLLGPPASGKSTLLLALADKLDSQLKKSGEVAYNGMALDQFCVQRTSAYISQTDNHIGELTVRETLDFAAKCQGASENWQECLKELVNLEKERGIRPSPEIDAFMKTASFRREKHNLVSDYVLRVLGLDICADTPVGSDMERGVSGGQKKRVTTGEMIIGPRKTLLMDEISTGLDSSTTFQIVNCMRNFVHEMEATVLMSLLQPAPETFELFDDLILLSEGKIIYQGPIKHVVDYFKSLGFSLPPRKGIADFLQEVTSKKDQAQYWSDQSKQHIFVSASEMAAVFKESQYGTYLEANLSSSCGNKDSALVLPRSKFAVPKFSLVRACFARELILISRNRFLYTFRTCQVAFVGIITSTLFLRTRLHPVDEQNGNLYLACLFFGLVHMMFNGFTEMTMTISRLPVFYKQRDNFFHPAWAFSLPNWILRIPYSFIEAVVWSCVVYYTVGFAPTVDRFFRFMLLLFSIHQMALGLFRMMGAIARDMTIASTFGSAVLLAIFLLGGFVVPKGFIKPWWDWAYWISPLMYAQRAVSVNEFSASRWSKVSVSGNMTVGTNILISHSLPTDDHWFWIGVGVLLAYSIFFNIMFTLALAFLNPLRKPQSMVPSDAGDGRDVHINTDSNKNTIGEIFENNDGFEGQTECKSKKGMILPFQPLTMTFHNVNYYVNMPKEMQAKGVPEKRLQLLSEVSGIFRPRVLTALVGASGSGKTTLMDVLAGRKTGGYIEGDIRISGHKKEQRTFARIAGYVEQNDIHSPQVTVEESLWFSSTLRLPNDISRETRHAFVEEVMALVELDQIRYALVGKQGLTGLSTEQRKRLTIAVELVANPSIIFMDEPTSGLDARAAAIVMRTVRNTVDTGRTVVCTIHQPSIDIFEAFDELLLMKRGGRVIYGGSLGVNSVDMINYFQGIPRVVPITEGYNPATWMLEVTTQASEERLGIDFATVYKNSYQFRNVENLIVELSIPASGTEPLKFSSEFSQNRLTQFMVCLRKQSLVYWRSPEYNVVRLFFTSVAAIIFGSIFWNVGMKRESTEDILLLMGALYAACLFLGVNNASSVQPVVSVERTVYYRERAANMYSSFPYAAAQVYHGLVEIPYIAVQTLIFGLITYFMVNYERNIRKLVLYLIYMFLTFTYFTFYGMVAVGLTPTQHMASVVSSAFYSLWNLLSGFLIPQSRIPGWWIWFYYICPVAWTLRGVITSQLGDVDTRIVGPGFDGTVHEFLQQNLGFEQGMTGATVAVLVAFSVFFFSIYAISIKMINFQRS.

The interval 52-71 (VLPDPDGLGGGDGGGRGEGQ) is disordered. The span at 58 to 69 (GLGGGDGGGRGE) shows a compositional bias: gly residues. The ABC transporter 1 domain occupies 154–428 (LISSHLLRPD…FKSLGFSLPP (275 aa)). 187–194 (GPPASGKS) serves as a coordination point for ATP. The 214-residue stretch at 505–718 (SLVRACFARE…AQRAVSVNEF (214 aa)) folds into the ABC transmembrane type-2 1 domain. 6 helical membrane passes run 523–543 (FLYTFRTCQVAFVGIITSTLF), 558–578 (LYLACLFFGLVHMMFNGFTEM), 615–635 (FIEAVVWSCVVYYTVGFAPTV), 642–662 (MLLLFSIHQMALGLFRMMGAI), 668–688 (IASTFGSAVLLAIFLLGGFVV), and 751–771 (FWIGVGVLLAYSIFFNIMFTL). The ABC transporter 2 domain maps to 838 to 1090 (MTFHNVNYYV…DMINYFQGIP (253 aa)). Position 883–890 (883–890 (GASGSGKT)) interacts with ATP. The 218-residue stretch at 1163-1380 (TQFMVCLRKQ…TLRGVITSQL (218 aa)) folds into the ABC transmembrane type-2 2 domain. 7 helical membrane-spanning segments follow: residues 1184–1204 (VVRLFFTSVAAIIFGSIFWNV), 1214–1234 (ILLLMGALYAACLFLGVNNAS), 1271–1291 (VEIPYIAVQTLIFGLITYFMV), 1300–1320 (LVLYLIYMFLTFTYFTFYGMV), 1330–1350 (MASVVSSAFYSLWNLLSGFLI), 1355–1375 (IPGWWIWFYYICPVAWTLRGV), and 1413–1433 (ATVAVLVAFSVFFFSIYAISI).

The protein belongs to the ABC transporter superfamily. ABCG family. PDR (TC 3.A.1.205) subfamily.

Its subcellular location is the membrane. May be a general defense protein. This is ABC transporter G family member 51 from Oryza sativa subsp. japonica (Rice).